The sequence spans 205 residues: Ribonuclease HII (205 aa).

The RNase H type-2 domain maps to 1–205; it reads MLVCGVDEAG…RPARLIEAGG (205 aa). 3 residues coordinate a divalent metal cation: Asp7, Glu8, and Asp105.

Belongs to the RNase HII family. Mn(2+) serves as cofactor. It depends on Mg(2+) as a cofactor.

The protein resides in the cytoplasm. It catalyses the reaction Endonucleolytic cleavage to 5'-phosphomonoester.. Endonuclease that specifically degrades the RNA of RNA-DNA hybrids. In Cenarchaeum symbiosum (strain A), this protein is Ribonuclease HII.